Here is a 205-residue protein sequence, read N- to C-terminus: UPF0316 protein Cthe_2213 (205 aa).

3 helical membrane passes run 15 to 37 (LPLL…IIFV), 44 to 64 (LAPV…SQIM), and 70 to 90 (FVCY…GIII).

It belongs to the UPF0316 family.

Its subcellular location is the cell membrane. The polypeptide is UPF0316 protein Cthe_2213 (Acetivibrio thermocellus (strain ATCC 27405 / DSM 1237 / JCM 9322 / NBRC 103400 / NCIMB 10682 / NRRL B-4536 / VPI 7372) (Clostridium thermocellum)).